The primary structure comprises 735 residues: MAEPLLRKTFSRLRGREKLPRKKSDAKERGHPAQRPEPSPPEPEPQAPEGSQAGAEGPSSPEASRSPARGAYLQSLEPSSRRWVLGGAKPAEDTSLGPGVPGTGEPAGEIWYNPIPEEDPRPPAPEPPGPQPGSAESEGLAPQGAAPASPPTKASRTKSPGPARRLSIKMKKLPELRRRLSLRGPRAGRERERAAPAGSVISRYHLDSSVGGPGPAAGPGGTRSPRAGYLSDGDSPERPAGPPSPTSFRPYEVGPAARAPPAALWGRLSLHLYGLGGLRPAPGATPRDLCCLLQVDGEARARTGPLRGGPDFLRLDHTFHLELEAARLLRALVLAWDPGVRRHRPCAQGTVLLPTVFRGCQAQQLAVRLEPQGLLYAKLTLSEQQEAPATAEPRVFGLPLPLLVERERPPGQVPLIIQKCVGQIERRGLRVVGLYRLCGSAAVKKELRDAFERDSAAVCLSEDLYPDINVITGILKDYLRELPTPLITQPLYKVVLEAMARDPPNRVPPTTEGTRGLLSCLPDVERATLTLLLDHLRLVSSFHAYNRMTPQNLAVCFGPVLLPARQAPTRPRARSSGPGLASAVDFKHHIEVLHYLLQSWPDPRLPRQSPDVAPYLRPKRQPPLHLPLADPEVVTRPRGRGGPESPPSNRYAGDWSVCGRDFLPCGRDFLSGPDYDHVTGSDSEDEDEEVGEPRVTGDFEDDFDAPFNPHLNLKDFDALILDLERELSKQINVCL.

Residues M1–V253 form a disordered region. Residues R14–H31 are compositionally biased toward basic and acidic residues. Residues R35–Q46 are compositionally biased toward pro residues. Residues A47 to A71 are compositionally biased toward low complexity. Over residues P122–Q131 the composition is skewed to pro residues. Positions G211–G221 are enriched in gly residues. Residues S224, S231, S235, and S244 each carry the phosphoserine modification. In terms of domain architecture, C2 spans R249–A366. A Rho-GAP domain is found at L398–R604. Phosphoserine is present on S575. Disordered stretches follow at residues Q608–Y651 and D674–T696. A phosphoserine mark is found at S681 and S683.

Palmitoylated. Probably palmitoylated by ZDHHC3 and ZDHHC7. Expressed in trophoblast cells of placental villi.

In terms of biological role, GTPase activator for the Rho-type GTPases. As a GCM1 downstream effector, it is involved in placental development and positively regulates trophoblast cells migration. It regulates cytoskeletal remodeling by controlling the activity of Rho GTPases including RHOA, CDC42 and RAC1. The protein is Rho GTPase-activating protein SYDE1 (SYDE1) of Homo sapiens (Human).